A 398-amino-acid polypeptide reads, in one-letter code: Phosphoglycerate kinase (398 aa).

Residues 21-23 (DFN), Arg36, 59-62 (HLGR), Arg119, and Arg157 contribute to the substrate site. ATP is bound by residues Lys208, Gly296, Glu327, and 354-357 (GGDS).

Belongs to the phosphoglycerate kinase family. As to quaternary structure, monomer.

It is found in the cytoplasm. The catalysed reaction is (2R)-3-phosphoglycerate + ATP = (2R)-3-phospho-glyceroyl phosphate + ADP. Its pathway is carbohydrate degradation; glycolysis; pyruvate from D-glyceraldehyde 3-phosphate: step 2/5. The protein is Phosphoglycerate kinase of Streptococcus equi subsp. equi (strain 4047).